The following is a 184-amino-acid chain: Phosphopantetheine adenylyltransferase (184 aa).

A substrate-binding site is contributed by S8. ATP-binding positions include 8–9 (SF) and H16. The substrate site is built by K40, L74, and R88. ATP is bound by residues 89–91 (GLR), E99, and 123–129 (WSFVSST).

The protein belongs to the bacterial CoaD family. As to quaternary structure, homohexamer. The cofactor is Mg(2+).

The protein resides in the cytoplasm. It catalyses the reaction (R)-4'-phosphopantetheine + ATP + H(+) = 3'-dephospho-CoA + diphosphate. It functions in the pathway cofactor biosynthesis; coenzyme A biosynthesis; CoA from (R)-pantothenate: step 4/5. Its function is as follows. Reversibly transfers an adenylyl group from ATP to 4'-phosphopantetheine, yielding dephospho-CoA (dPCoA) and pyrophosphate. The sequence is that of Phosphopantetheine adenylyltransferase from Deinococcus geothermalis (strain DSM 11300 / CIP 105573 / AG-3a).